Reading from the N-terminus, the 165-residue chain is Small ribosomal subunit protein uS5 (165 aa).

An S5 DRBM domain is found at 10–73 (LVEKLVAVDR…EAARRNMITV (64 aa)).

Belongs to the universal ribosomal protein uS5 family. Part of the 30S ribosomal subunit. Contacts proteins S4 and S8.

Functionally, with S4 and S12 plays an important role in translational accuracy. In terms of biological role, located at the back of the 30S subunit body where it stabilizes the conformation of the head with respect to the body. The chain is Small ribosomal subunit protein uS5 from Acinetobacter baumannii (strain AB307-0294).